We begin with the raw amino-acid sequence, 194 residues long: Xanthine phosphoribosyltransferase (194 aa).

Residues Leu-20 and Asn-27 each contribute to the xanthine site. 128–132 provides a ligand contact to 5-phospho-alpha-D-ribose 1-diphosphate; it reads ANGQA. A xanthine-binding site is contributed by Lys-156.

It belongs to the purine/pyrimidine phosphoribosyltransferase family. Xpt subfamily. Homodimer.

The protein localises to the cytoplasm. It carries out the reaction XMP + diphosphate = xanthine + 5-phospho-alpha-D-ribose 1-diphosphate. The protein operates within purine metabolism; XMP biosynthesis via salvage pathway; XMP from xanthine: step 1/1. Its function is as follows. Converts the preformed base xanthine, a product of nucleic acid breakdown, to xanthosine 5'-monophosphate (XMP), so it can be reused for RNA or DNA synthesis. The sequence is that of Xanthine phosphoribosyltransferase from Bacillus licheniformis (strain ATCC 14580 / DSM 13 / JCM 2505 / CCUG 7422 / NBRC 12200 / NCIMB 9375 / NCTC 10341 / NRRL NRS-1264 / Gibson 46).